The following is an 89-amino-acid chain: Small ribosomal subunit protein uS15 (89 aa).

It belongs to the universal ribosomal protein uS15 family. As to quaternary structure, part of the 30S ribosomal subunit. Forms a bridge to the 50S subunit in the 70S ribosome, contacting the 23S rRNA.

In terms of biological role, one of the primary rRNA binding proteins, it binds directly to 16S rRNA where it helps nucleate assembly of the platform of the 30S subunit by binding and bridging several RNA helices of the 16S rRNA. Functionally, forms an intersubunit bridge (bridge B4) with the 23S rRNA of the 50S subunit in the ribosome. This chain is Small ribosomal subunit protein uS15, found in Dictyoglomus turgidum (strain DSM 6724 / Z-1310).